A 448-amino-acid polypeptide reads, in one-letter code: ATP-dependent protease ATPase subunit HslU (448 aa).

ATP contacts are provided by residues Val21, 63–68, Asp260, Glu326, and Arg398; that span reads GVGKTE.

This sequence belongs to the ClpX chaperone family. HslU subfamily. In terms of assembly, a double ring-shaped homohexamer of HslV is capped on each side by a ring-shaped HslU homohexamer. The assembly of the HslU/HslV complex is dependent on binding of ATP.

The protein localises to the cytoplasm. Its function is as follows. ATPase subunit of a proteasome-like degradation complex; this subunit has chaperone activity. The binding of ATP and its subsequent hydrolysis by HslU are essential for unfolding of protein substrates subsequently hydrolyzed by HslV. HslU recognizes the N-terminal part of its protein substrates and unfolds these before they are guided to HslV for hydrolysis. This Sulfurihydrogenibium sp. (strain YO3AOP1) protein is ATP-dependent protease ATPase subunit HslU.